The sequence spans 140 residues: Large ribosomal subunit protein uL11 (140 aa).

This sequence belongs to the universal ribosomal protein uL11 family. Part of the ribosomal stalk of the 50S ribosomal subunit. Interacts with L10 and the large rRNA to form the base of the stalk. L10 forms an elongated spine to which L12 dimers bind in a sequential fashion forming a multimeric L10(L12)X complex. One or more lysine residues are methylated.

In terms of biological role, forms part of the ribosomal stalk which helps the ribosome interact with GTP-bound translation factors. The chain is Large ribosomal subunit protein uL11 from Geotalea daltonii (strain DSM 22248 / JCM 15807 / FRC-32) (Geobacter daltonii).